Consider the following 482-residue polypeptide: GTPase Obg (482 aa).

The region spanning 2–159 (PRFVDRVVIH…VDLTLELKTV (158 aa)) is the Obg domain. An OBG-type G domain is found at 160-340 (ADVGLVGFPS…LTFALWEMIV (181 aa)). Residues 166–173 (GFPSAGKS), 191–195 (FTTLV), 212–215 (DVPG), 292–295 (NKVD), and 321–323 (STL) contribute to the GTP site. Serine 173 and threonine 193 together coordinate Mg(2+). One can recognise an OCT domain in the interval 358-438 (PIPVDESGFT…IGDMTFDWEP (81 aa)). Residues 441 to 482 (PAGVDVTMSGRGTDARIDKTDRVGAAERRQARRVRRGQVEPE) form a disordered region. Residues 453–469 (TDARIDKTDRVGAAERR) show a composition bias toward basic and acidic residues.

Belongs to the TRAFAC class OBG-HflX-like GTPase superfamily. OBG GTPase family. As to quaternary structure, monomer. Mg(2+) is required as a cofactor.

Its subcellular location is the cytoplasm. Its function is as follows. An essential GTPase which binds GTP, GDP and possibly (p)ppGpp with moderate affinity, with high nucleotide exchange rates and a fairly low GTP hydrolysis rate. Plays a role in control of the cell cycle, stress response, ribosome biogenesis and in those bacteria that undergo differentiation, in morphogenesis control. This is GTPase Obg from Mycobacteroides abscessus (strain ATCC 19977 / DSM 44196 / CCUG 20993 / CIP 104536 / JCM 13569 / NCTC 13031 / TMC 1543 / L948) (Mycobacterium abscessus).